Reading from the N-terminus, the 658-residue chain is Pentatricopeptide repeat-containing protein At1g69290 (658 aa).

2 disordered regions span residues 1 to 23 and 39 to 61; these read MFRKTLNSISRRHFSSSSPESPS and TLSPSLSPPQNPKTLTPDQKSSF. The segment covering 50 to 61 has biased composition (polar residues); the sequence is PKTLTPDQKSSF. 11 PPR repeats span residues 214–249, 250–284, 285–320, 323–353, 361–395, 397–431, 432–466, 467–497, 503–537, 538–568, and 581–615; these read DLVASNAALEACCRQMESLADAENVIESMAVLGVKP, DELSFGFLAYLYARKGLREKISELENLMDGFGFAS, RRILYSNMISGYVKSGDLDSVSDVILHSLKEGGEES, SVETYCELVKGFIESKSVKSLAKVILEAQKL, DSSVGFGIINACVNLGFSDKAHSILEEMIAQGGGS, GIGVYVPILKAYCKEYRTAEATQLVTEISSSGLQL, DVEISNALIEASMTNQDFISAFTLFRDMRENRVVD, LKGSYLTIMTGLLENQRPELMAAFLDEVVED, NSHDWNSIIHAFCKSGRLEDARRTFRRMVFLRYEP, NNQTYLSLINGYVSGEKYFNVLLLWNEIKGK, and DHALVDAFLYALVKGGFFDAAMQVVEKSQEMKIFV.

It belongs to the PPR family. P subfamily.

This is Pentatricopeptide repeat-containing protein At1g69290 from Arabidopsis thaliana (Mouse-ear cress).